A 302-amino-acid polypeptide reads, in one-letter code: Aliphatic sulfonates import ATP-binding protein SsuB (302 aa).

Low complexity predominate over residues 30-57 (PATADAQHTADAQHTADAQHTADAQHTA). The tract at residues 30–65 (PATADAQHTADAQHTADAQHTADAQHTAETAETRGA) is disordered. An ABC transporter domain is found at 70-284 (IRIRGLRRTF…RRTDPAFDRL (215 aa)). 102–109 (GRSGSGKS) contributes to the ATP binding site.

It belongs to the ABC transporter superfamily. Aliphatic sulfonates importer (TC 3.A.1.17.2) family. In terms of assembly, the complex is composed of two ATP-binding proteins (SsuB), two transmembrane proteins (SsuC) and a solute-binding protein (SsuA).

It localises to the cell membrane. The enzyme catalyses ATP + H2O + aliphatic sulfonate-[sulfonate-binding protein]Side 1 = ADP + phosphate + aliphatic sulfonateSide 2 + [sulfonate-binding protein]Side 1.. Functionally, part of the ABC transporter complex SsuABC involved in aliphatic sulfonates import. Responsible for energy coupling to the transport system. This is Aliphatic sulfonates import ATP-binding protein SsuB from Frankia casuarinae (strain DSM 45818 / CECT 9043 / HFP020203 / CcI3).